A 791-amino-acid chain; its full sequence is FHF complex subunit HOOK-interacting protein 1B (791 aa).

Disordered regions lie at residues 465–510 (APSP…VPRP) and 524–556 (SLGGSESPGPAPRSPGLTASPTSSPGRRPSPAE). Serine 467 carries the phosphoserine modification. Low complexity predominate over residues 496–510 (SPSVDSSSVVTVPRP). Phosphoserine is present on residues serine 524, serine 537, serine 543, serine 547, and serine 679. Residues 541-552 (TASPTSSPGRRP) show a composition bias toward low complexity. Position 708 is a phosphothreonine (threonine 708). Serine 716 carries the phosphoserine modification.

Belongs to the FHIP family. Component of the FTS/Hook/FHIP complex (FHF complex), composed of AKTIP/FTS, FHIP1B, and one or more members of the Hook family of proteins HOOK1, HOOK2, and HOOK3. The FHF complex associates with the homotypic vesicular sorting complex (the HOPS complex).

In terms of biological role, component of the FTS/Hook/FHIP complex (FHF complex). The FHF complex may function to promote vesicle trafficking and/or fusion via the homotypic vesicular protein sorting complex (the HOPS complex). FHF complex promotes the distribution of AP-4 complex to the perinuclear area of the cell. The polypeptide is FHF complex subunit HOOK-interacting protein 1B (Fhip1b) (Rattus norvegicus (Rat)).